A 563-amino-acid chain; its full sequence is uncharacterized protein (563 aa).

The protein belongs to the HyuB family.

This is an uncharacterized protein from Methanocaldococcus jannaschii (strain ATCC 43067 / DSM 2661 / JAL-1 / JCM 10045 / NBRC 100440) (Methanococcus jannaschii).